A 414-amino-acid chain; its full sequence is CCA-adding enzyme (414 aa).

ATP is bound by residues G8 and R11. CTP is bound by residues G8 and R11. D21 and D23 together coordinate Mg(2+). Residues R91, R137, and R140 each contribute to the ATP site. CTP-binding residues include R91, R137, and R140.

The protein belongs to the tRNA nucleotidyltransferase/poly(A) polymerase family. Bacterial CCA-adding enzyme type 2 subfamily. Requires Mg(2+) as cofactor.

It carries out the reaction a tRNA precursor + 2 CTP + ATP = a tRNA with a 3' CCA end + 3 diphosphate. The catalysed reaction is a tRNA with a 3' CCA end + 2 CTP + ATP = a tRNA with a 3' CCACCA end + 3 diphosphate. Catalyzes the addition and repair of the essential 3'-terminal CCA sequence in tRNAs without using a nucleic acid template. Adds these three nucleotides in the order of C, C, and A to the tRNA nucleotide-73, using CTP and ATP as substrates and producing inorganic pyrophosphate. tRNA 3'-terminal CCA addition is required both for tRNA processing and repair. Also involved in tRNA surveillance by mediating tandem CCA addition to generate a CCACCA at the 3' terminus of unstable tRNAs. While stable tRNAs receive only 3'-terminal CCA, unstable tRNAs are marked with CCACCA and rapidly degraded. The protein is CCA-adding enzyme of Buchnera aphidicola subsp. Acyrthosiphon pisum (strain Tuc7).